Here is a 63-residue protein sequence, read N- to C-terminus: Sperm protamine P1 (63 aa).

Residues 1–63 (MARYRRHSRS…RYSRRGRRRY (63 aa)) are disordered.

This sequence belongs to the protamine P1 family. As to expression, testis.

Its subcellular location is the nucleus. The protein resides in the chromosome. Its function is as follows. Protamines substitute for histones in the chromatin of sperm during the haploid phase of spermatogenesis. They compact sperm DNA into a highly condensed, stable and inactive complex. The chain is Sperm protamine P1 (PRM1) from Pseudantechinus macdonnellensis (Fat-tailed marsupial mouse).